A 525-amino-acid chain; its full sequence is Bifunctional purine biosynthesis protein PurH (525 aa).

One can recognise an MGS-like domain in the interval 10–156 (HRIPIRRALV…KNHPSVAIVT (147 aa)).

Belongs to the PurH family.

It catalyses the reaction (6R)-10-formyltetrahydrofolate + 5-amino-1-(5-phospho-beta-D-ribosyl)imidazole-4-carboxamide = 5-formamido-1-(5-phospho-D-ribosyl)imidazole-4-carboxamide + (6S)-5,6,7,8-tetrahydrofolate. It carries out the reaction IMP + H2O = 5-formamido-1-(5-phospho-D-ribosyl)imidazole-4-carboxamide. It functions in the pathway purine metabolism; IMP biosynthesis via de novo pathway; 5-formamido-1-(5-phospho-D-ribosyl)imidazole-4-carboxamide from 5-amino-1-(5-phospho-D-ribosyl)imidazole-4-carboxamide (10-formyl THF route): step 1/1. It participates in purine metabolism; IMP biosynthesis via de novo pathway; IMP from 5-formamido-1-(5-phospho-D-ribosyl)imidazole-4-carboxamide: step 1/1. In Nocardioides sp. (strain ATCC BAA-499 / JS614), this protein is Bifunctional purine biosynthesis protein PurH.